A 462-amino-acid polypeptide reads, in one-letter code: Zinc finger CCCH domain-containing protein 8 (462 aa).

C3H1-type zinc fingers lie at residues 105-133 (RPGE…HPQW), 156-184 (QEGE…HPKE), 209-237 (RPSE…HPKD), 288-316 (RPGE…HPDR), 367-395 (RPGA…HPID), and 422-450 (REDA…HPPP).

This chain is Zinc finger CCCH domain-containing protein 8, found in Oryza sativa subsp. japonica (Rice).